Here is a 120-residue protein sequence, read N- to C-terminus: Small ribosomal subunit protein bS6 (120 aa).

Belongs to the bacterial ribosomal protein bS6 family.

Functionally, binds together with bS18 to 16S ribosomal RNA. In Blochmanniella floridana, this protein is Small ribosomal subunit protein bS6.